A 720-amino-acid chain; its full sequence is MVPLGYNNKYFGYVQDCQQQATDNSPIHYYTGDKQNQSYSQSMCKEQSQNTVTVSPASFNKKAQSTQGSYNRAMKSSSSLYSTCSTTPSKDSLLKNSSYPSWKSLDSSLSHHKSETTSLTSFTSTSSLEPSKISSRSRLLLPKTQTSSSIDLCWKSPSLESNQRVSTSSSTSVQHHEAPSLNIIWTTPSLESNQSEHDSQLCKSKSQKDSSLDRLWSSLLESSQKALSSPSFTNRLQRNSFPPTSSSLEFSRVARNSPLPDCSKPLKIPVSNSNNNVFSLPLSPAKSRKSTPSPHSFLPSRRLSTCQPKPKIVARCDPSTRAINTAVCHPKVQNTASLSDKQRPRQLPSIHPKPNPSGQRVSSPKPCIKNKIASVPCSRLPNKSSVERSVKTEPENEISWALDYSHPCIIKGGSVPVDVVNKIINSISKSTIQKDLSRQILFRRMRGKPNPRPGPRLSSTYSVCLECASAIKSQCNHLSGKRDPRCATLFVIPTPESSTDGKVDVKIILILSLPEKPSSTCFQLPMKDSKSENNLEALDDNLDVLEKITQFFPASESDFIQGLKTKRKCLAVSSESKDLSQEPQSIDWLLYVKNSNGIQLETQVQGPSSSSSSSCSSVSSSSSASSIGRPSPPTPWVDPTPVPVSGYVLAKVRSYHRLPPGTSWLEFIRGSSSDTIKLRQSPPVKAKPVRSHNSKCLKKGKRETSALLRYFQTKFQNEKS.

Over residues 227-249 the composition is skewed to polar residues; the sequence is LSSPSFTNRLQRNSFPPTSSSLE. 5 disordered regions span residues 227–250, 264–303, 333–366, 602–640, and 678–698; these read LSSPSFTNRLQRNSFPPTSSSLEF, KPLKIPVSNSNNNVFSLPLSPAKSRKSTPSPHSFLPSRRL, QNTASLSDKQRPRQLPSIHPKPNPSGQRVSSPKP, TQVQGPSSSSSSSCSSVSSSSSASSIGRPSPPTPWVDPT, and LRQSPPVKAKPVRSHNSKCLK. Residues 608 to 626 show a composition bias toward low complexity; that stretch reads SSSSSSSCSSVSSSSSASS. Over residues 630-640 the composition is skewed to pro residues; that stretch reads PSPPTPWVDPT. Residues 687-698 are compositionally biased toward basic residues; sequence KPVRSHNSKCLK.

As to quaternary structure, interacts (via C-terminus) with CSNK2A2. Phosphorylated by CK2 (casein kinase II), specifically by complexes containing catalytic subunit CSNK2A2. Expressed exclusively in testis (at protein level). Within testis, expressed mainly in the intermediate compartment of the seminiferous tubules with weaker expression in the basal and adluminal compartments.

The protein localises to the nucleus. May play a role in chromatin regulation of male germ cells. The polypeptide is Casein kinase II subunit alpha'-interacting protein (Mus musculus (Mouse)).